The primary structure comprises 958 residues: Valine--tRNA ligase (958 aa).

Residues 42–52 (PNVTGSLHMGH) carry the 'HIGH' region motif. Positions 554–558 (KMSKS) match the 'KMSKS' region motif. Lys557 contacts ATP. A coiled-coil region spans residues 887–956 (LVDVAAEMAR…TEQKAEFAKL (70 aa)).

This sequence belongs to the class-I aminoacyl-tRNA synthetase family. ValS type 1 subfamily. As to quaternary structure, monomer.

Its subcellular location is the cytoplasm. The enzyme catalyses tRNA(Val) + L-valine + ATP = L-valyl-tRNA(Val) + AMP + diphosphate. Catalyzes the attachment of valine to tRNA(Val). As ValRS can inadvertently accommodate and process structurally similar amino acids such as threonine, to avoid such errors, it has a 'posttransfer' editing activity that hydrolyzes mischarged Thr-tRNA(Val) in a tRNA-dependent manner. The sequence is that of Valine--tRNA ligase from Shewanella oneidensis (strain ATCC 700550 / JCM 31522 / CIP 106686 / LMG 19005 / NCIMB 14063 / MR-1).